A 374-amino-acid chain; its full sequence is DNA integrity scanning protein DisA (374 aa).

Residues 20-158 (DGLMRASLSA…DGMRRVLEDS (139 aa)) form the DAC domain. ATP is bound by residues glycine 87, leucine 105, and 118 to 122 (TRHRT).

The protein belongs to the DisA family. Homooctamer. Requires Mg(2+) as cofactor.

The enzyme catalyses 2 ATP = 3',3'-c-di-AMP + 2 diphosphate. Its function is as follows. Participates in a DNA-damage check-point that is active prior to asymmetric division when DNA is damaged. DisA forms globular foci that rapidly scan along the chromosomes during sporulation, searching for lesions. When a lesion is present, DisA pauses at the lesion site. This triggers a cellular response that culminates in a temporary block in sporulation initiation. Also has diadenylate cyclase activity, catalyzing the condensation of 2 ATP molecules into cyclic di-AMP (c-di-AMP). c-di-AMP acts as a signaling molecule that couples DNA integrity with progression of sporulation. The rise in c-di-AMP level generated by DisA while scanning the chromosome, operates as a positive signal that advances sporulation; upon encountering a lesion, the DisA focus arrests at the damaged site and halts c-di-AMP synthesis. The protein is DNA integrity scanning protein DisA of Streptomyces avermitilis (strain ATCC 31267 / DSM 46492 / JCM 5070 / NBRC 14893 / NCIMB 12804 / NRRL 8165 / MA-4680).